Reading from the N-terminus, the 206-residue chain is LexA repressor (206 aa).

A DNA-binding region (H-T-H motif) is located at residues 28–48; sequence RAEIATRLGFKSANAAEEHLK. Active-site for autocatalytic cleavage activity residues include Ser-123 and Lys-160.

The protein belongs to the peptidase S24 family. Homodimer.

The enzyme catalyses Hydrolysis of Ala-|-Gly bond in repressor LexA.. Its function is as follows. Represses a number of genes involved in the response to DNA damage (SOS response), including recA and lexA. In the presence of single-stranded DNA, RecA interacts with LexA causing an autocatalytic cleavage which disrupts the DNA-binding part of LexA, leading to derepression of the SOS regulon and eventually DNA repair. This is LexA repressor from Shewanella baltica (strain OS223).